The following is a 758-amino-acid chain: CRISPR system single-strand-specific deoxyribonuclease Cas10/Csm1 (subtype III-A) (758 aa).

The segment at 1 to 82 is HD domain; the sequence is MKKEKIDLFY…TYIADNIASG (82 aa). The 139-residue stretch at 509 to 647 folds into the GGDEF domain; sequence KRLAVVRLDV…EKDSISLFSS (139 aa).

Belongs to the CRISPR-associated Cas10/Csm1 family. As to quaternary structure, part of the Csm effector complex that includes at least Cas10(1), Csm2(3), Csm3(5), Csm4(1), Csm5(1) and mature crRNA. The Csm complex is elongated and slightly twisted with a maximal length of 215 Angstroms and a diameter of 75-80 Angstroms. It has been modeled to have a central protein filamant of Csm3 subunits along which the dsRNA helix of paired crRNA and target RNA binds. The filament is capped at one end by Cas10 and Csm4 and at the other end by Csm5; ssDNA is thought to bind to the N-terminal HD domain of Cas10. Csm with a precursor crRNA does not include Csm5, while Cas6, the enzyme probably involved in pre-crRNA processing, is found associated with a subset of the Csm complex. A divalent metal cation is required as a cofactor.

It catalyses the reaction 6 ATP = cyclic hexaadenylate + 6 diphosphate. With respect to regulation, ssDNase activity is activated by target RNA binding to the Csm-crRNA complex and is inhibited by EDTA. CRISPR (clustered regularly interspaced short palindromic repeat) is an adaptive immune system that provides protection against mobile genetic elements (viruses, transposable elements and conjugative plasmids). CRISPR clusters contain spacers, sequences complementary to antecedent mobile elements, and target invading nucleic acids. CRISPR clusters are transcribed and processed into CRISPR RNA (crRNA). The type III-A Csm effector complex binds crRNA and acts as a crRNA-guided RNase, DNase and cyclic oligoadenylate synthase; binding of target RNA cognate to the crRNA is required for all activities. In a heterologous host this Csm effector complex restricts ssRNA phage MS2, suggesting it may target RNA viruses in vivo. Its function is as follows. Csm functions as a non-specific ssDNase. Base-pairing between crRNA and target RNA to form a ternary Csm complex activates a ssDNase activity; target RNA cleavage suppresses the ssDNase, a temporal control that prevents uncontrolled DNA degradation. Viral RNA transcripts probably tether the Csm complex to the viral genome, recruiting Cas10 ssDNA activity which is able to degrade DNA in the transcription bubble, spatially controlling the DNase activity. In terms of biological role, this subunit has a weak ssDNase activity that is dramatically activated by the ternary Csm effector complex (the crRNA, Cas proteins and a cognate target ssRNA). Target RNA and ssDNA are cleaved simultaneously, although RNase activity (of Csm3) is much faster. RNA cleavage by Csm3 is not required for ssDNase activity as Csm complex with inactive Csm3 still has ssDNase activity; however as the cleaved target RNA products dissociate away ssDNase activity decreases. Self-recognition, with subsequent repression of the ssDNase activity, occurs when the 5' handle of the crRNA bases pairs with the 3' flanking sequence of the target RNA (which would occur if the CRISPR locus were transcribed as an anti-pre-crRNA). This protein has low activity on dsDNA which is not stimulated by the Csm complex. Functionally, this subunit is a single-strand-specific deoxyribonuclease (ssDNase) which digests both linear and circular ssDNA; it has both exo- and endonuclease activity. When associated with the ternary Csm effector complex (the crRNA, Cas proteins and a cognate target ssRNA) synthesizes cyclic oligoadenylates (cOA) from ATP, producing cyclic triadenylate (cA3) up to cyclic hexaadenylate (cA6), which is the active cOA. The enzyme is also able to cyclize pppA3 up to pppA6. cOAs are second messengers that induce an antiviral state important for defense against invading nucleic acids. Synthesis of cOA can occur with AMP plus ATP, 2'dATP or 3'dATP (but no other nucleotides), and requires a free 3'-OH ribose moiety. In Streptococcus thermophilus, this protein is CRISPR system single-strand-specific deoxyribonuclease Cas10/Csm1 (subtype III-A).